Reading from the N-terminus, the 248-residue chain is Granzyme C (248 aa).

An N-terminal signal peptide occupies residues 1-18; sequence MPPVLILLTLLLPLRAGA. Residues 19–20 constitute a propeptide that is removed on maturation; it reads EE. The Peptidase S1 domain maps to 21–246; sequence IIGGNEISPH…FVSWIKKTMK (226 aa). An intrachain disulfide couples Cys50 to Cys66. Catalysis depends on charge relay system residues His65 and Asp109. Cystine bridges form between Cys143–Cys210 and Cys174–Cys189. The active-site Charge relay system is the Ser204.

This sequence belongs to the peptidase S1 family. Granzyme subfamily.

The protein resides in the cytolytic granule. Functionally, this enzyme is probably necessary for target cell lysis in cell-mediated immune responses. The chain is Granzyme C (Gzmc) from Mus musculus (Mouse).